A 214-amino-acid chain; its full sequence is ATP phosphoribosyltransferase (214 aa).

This sequence belongs to the ATP phosphoribosyltransferase family. Short subfamily. As to quaternary structure, heteromultimer composed of HisG and HisZ subunits.

It is found in the cytoplasm. It catalyses the reaction 1-(5-phospho-beta-D-ribosyl)-ATP + diphosphate = 5-phospho-alpha-D-ribose 1-diphosphate + ATP. Its pathway is amino-acid biosynthesis; L-histidine biosynthesis; L-histidine from 5-phospho-alpha-D-ribose 1-diphosphate: step 1/9. Its function is as follows. Catalyzes the condensation of ATP and 5-phosphoribose 1-diphosphate to form N'-(5'-phosphoribosyl)-ATP (PR-ATP). Has a crucial role in the pathway because the rate of histidine biosynthesis seems to be controlled primarily by regulation of HisG enzymatic activity. The chain is ATP phosphoribosyltransferase from Methylibium petroleiphilum (strain ATCC BAA-1232 / LMG 22953 / PM1).